A 130-amino-acid polypeptide reads, in one-letter code: Ribosome-binding factor A (130 aa).

The interval 111-130 (RDLDDVGPEATSSDEDAEQR) is disordered.

The protein belongs to the RbfA family. As to quaternary structure, monomer. Binds 30S ribosomal subunits, but not 50S ribosomal subunits or 70S ribosomes.

Its subcellular location is the cytoplasm. In terms of biological role, one of several proteins that assist in the late maturation steps of the functional core of the 30S ribosomal subunit. Associates with free 30S ribosomal subunits (but not with 30S subunits that are part of 70S ribosomes or polysomes). Required for efficient processing of 16S rRNA. May interact with the 5'-terminal helix region of 16S rRNA. The sequence is that of Ribosome-binding factor A from Xanthomonas axonopodis pv. citri (strain 306).